The primary structure comprises 253 residues: Probable U2 small nuclear ribonucleoprotein A' (253 aa).

LRR repeat units lie at residues 20-41 (NMREINLRGQKIPVIENMGVTR), 43-64 (QFDVIDLTDNDIRKLDNFPTFS), 65-86 (RLNTLYLHNNRINYIAPDIATK), and 89-110 (NLKTLALTNNNICELGDIEPLA). Residues 123-161 (NPITHKDNYRMYMIYKLPTVRVIDFNRVRLTEREAAKKM) form the LRRCT domain. Disordered regions lie at residues 163–205 (KGKS…EDRE) and 232–253 (VPEKGWNRQMDQNGADGEAMES). Residues 169 to 182 (KARDAIQKSVHTED) show a composition bias toward basic and acidic residues.

The protein belongs to the U2 small nuclear ribonucleoprotein A family. In terms of assembly, interacts with rnp-3.

The protein localises to the nucleus. In terms of biological role, this protein is associated with sn-RNP U2. It helps the A' protein to bind stem loop IV of U2 snRNA. Required maternally for early embryonic development and zygotically for germline and somatic development. Has a role in the switch from mitosis to meiosis. Might function in alternative splicing. This Caenorhabditis elegans protein is Probable U2 small nuclear ribonucleoprotein A' (mog-2).